We begin with the raw amino-acid sequence, 974 residues long: Kinesin-like protein KIN-7A (974 aa).

Residues methionine 1–glutamate 29 form a disordered region. Positions lysine 31–valine 353 constitute a Kinesin motor domain. Glycine 117–threonine 124 lines the ATP pocket. 2 coiled-coil regions span residues valine 362–asparagine 435 and serine 565–leucine 603. Disordered stretches follow at residues serine 605–proline 649 and asparagine 663–asparagine 713. The span at threonine 616–leucine 628 shows a compositional bias: basic residues. Polar residues-rich tracts occupy residues asparagine 638–proline 649 and proline 666–glycine 682. Over residues serine 683–glutamate 693 the composition is skewed to basic and acidic residues.

The protein belongs to the TRAFAC class myosin-kinesin ATPase superfamily. Kinesin family. KIN-7 subfamily. In terms of processing, phosphorylated at Thr-145, Thr-687 and Thr-703 by CDKAs and CDKBs. Phosphorylated NACK1 fails to mediate cytokinesis. In terms of tissue distribution, expressed in roots, flowers, pollen mother cells and embryos.

It is found in the cytoplasm. Its subcellular location is the cytoskeleton. It localises to the phragmoplast. Probable plus end-directed motor protein that functions in the NACK-PQR (ANP1-MKK6-MPK4) MAP kinase signaling pathway, which is essential for somatic cell cytokinesis, especially for the cell-plate formation and its expansion. Regulates the activity and the localization of ANP1, probably by association through the non-catalytic region of the kinase. Functionally redundant with NACK2 and essential to promote the progression of cytokinesis and for cellularization (formation of the cell plate) during microgametogenesis and megagametogenesis. The sequence is that of Kinesin-like protein KIN-7A from Arabidopsis thaliana (Mouse-ear cress).